Reading from the N-terminus, the 509-residue chain is L-aspartate semialdehyde sulfurtransferase (509 aa).

The Cysteine persulfide intermediate role is filled by Cys-133. CBS domains lie at 394-450 (LSKP…NKKT) and 455-509 (MTRN…GGKK). Residues Ser-395, Ile-399, and His-421 each coordinate S-methyl-5'-thioadenosine. Residues Asp-439, Thr-456, Ile-460, and 479–482 (NISG) contribute to the S-adenosyl-L-methionine site. An S-methyl-5'-thioadenosine-binding site is contributed by 497-500 (TSED).

It belongs to the L-aspartate semialdehyde sulfurtransferase family. As to quaternary structure, homodimer. May form a complex with MJ0099.

The enzyme catalyses L-aspartate 4-semialdehyde + reduced 2[4Fe-4S]-[ferredoxin] + hydrogen sulfide + 3 H(+) = oxidized 2[4Fe-4S]-[ferredoxin] + L-homocysteine + H2O. Its pathway is amino-acid biosynthesis. With respect to regulation, the ligand-induced conformational reorganization of the protein could be an important regulatory mechanism. Required for O-acetylhomoserine sulfhydrylase (OAHS)-independent homocysteine (Hcy) biosynthesis. Together with MJ0099, catalyzes the condensation of sulfide with aspartate semialdehyde to generate homocysteine. Likely functions through persulfide intermediate. This chain is L-aspartate semialdehyde sulfurtransferase, found in Methanocaldococcus jannaschii (strain ATCC 43067 / DSM 2661 / JAL-1 / JCM 10045 / NBRC 100440) (Methanococcus jannaschii).